Consider the following 163-residue polypeptide: UPF0478 protein SERP1299 (163 aa).

A helical membrane pass occupies residues 7–27; sequence IAGIIAAIAFLILCIGIVVVL.

It belongs to the UPF0478 family.

Its subcellular location is the cell membrane. The protein is UPF0478 protein SERP1299 of Staphylococcus epidermidis (strain ATCC 35984 / DSM 28319 / BCRC 17069 / CCUG 31568 / BM 3577 / RP62A).